The primary structure comprises 264 residues: Thymidylate synthase (264 aa).

Arg21 contributes to the dUMP binding site. His51 is a (6R)-5,10-methylene-5,6,7,8-tetrahydrofolate binding site. DUMP is bound at residue 126–127 (RR). Catalysis depends on Cys146, which acts as the Nucleophile. Residues 166–169 (RSAD), Asn177, and 207–209 (HLY) each bind dUMP. Asp169 is a (6R)-5,10-methylene-5,6,7,8-tetrahydrofolate binding site. Ala263 is a (6R)-5,10-methylene-5,6,7,8-tetrahydrofolate binding site.

It belongs to the thymidylate synthase family. Bacterial-type ThyA subfamily. Homodimer.

It is found in the cytoplasm. It catalyses the reaction dUMP + (6R)-5,10-methylene-5,6,7,8-tetrahydrofolate = 7,8-dihydrofolate + dTMP. The protein operates within pyrimidine metabolism; dTTP biosynthesis. Functionally, catalyzes the reductive methylation of 2'-deoxyuridine-5'-monophosphate (dUMP) to 2'-deoxythymidine-5'-monophosphate (dTMP) while utilizing 5,10-methylenetetrahydrofolate (mTHF) as the methyl donor and reductant in the reaction, yielding dihydrofolate (DHF) as a by-product. This enzymatic reaction provides an intracellular de novo source of dTMP, an essential precursor for DNA biosynthesis. The protein is Thymidylate synthase of Dechloromonas aromatica (strain RCB).